The primary structure comprises 320 residues: Homoserine kinase (320 aa).

Residue 100–110 coordinates ATP; that stretch reads PLSSGMGSSAA.

It belongs to the GHMP kinase family. Homoserine kinase subfamily.

It is found in the cytoplasm. It catalyses the reaction L-homoserine + ATP = O-phospho-L-homoserine + ADP + H(+). Its pathway is amino-acid biosynthesis; L-threonine biosynthesis; L-threonine from L-aspartate: step 4/5. In terms of biological role, catalyzes the ATP-dependent phosphorylation of L-homoserine to L-homoserine phosphate. This Chlorobium phaeobacteroides (strain DSM 266 / SMG 266 / 2430) protein is Homoserine kinase.